A 485-amino-acid polypeptide reads, in one-letter code: 6-phosphogluconate dehydrogenase, decarboxylating (485 aa).

Residues 12-17, 35-37, 77-79, and Asn105 contribute to the NADP(+) site; these read GLAVMG, NRT, and VKA. Residues Asn105 and 131–133 each bind substrate; that span reads SGG. Residue Lys186 is the Proton acceptor of the active site. 189–190 is a binding site for substrate; that stretch reads HN. Glu193 (proton donor) is an active-site residue. Tyr194, Lys263, Arg290, Arg449, and His455 together coordinate substrate.

This sequence belongs to the 6-phosphogluconate dehydrogenase family. In terms of assembly, homodimer.

It catalyses the reaction 6-phospho-D-gluconate + NADP(+) = D-ribulose 5-phosphate + CO2 + NADPH. Its pathway is carbohydrate degradation; pentose phosphate pathway; D-ribulose 5-phosphate from D-glucose 6-phosphate (oxidative stage): step 3/3. Its function is as follows. Catalyzes the oxidative decarboxylation of 6-phosphogluconate to ribulose 5-phosphate and CO(2), with concomitant reduction of NADP to NADPH. This is 6-phosphogluconate dehydrogenase, decarboxylating (6-PGD) from Cunninghamella elegans.